The sequence spans 371 residues: Solute carrier family 35 member F6 (371 aa).

Residues 1 to 25 (MAWTKHQLFLAGLMLVTGSINTLSA) form the signal peptide. The next 2 membrane-spanning stretches (helical) occupy residues 48–68 (FLQA…FYLL) and 89–109 (LLFL…YVAL). One can recognise an EamA domain in the interval 104–160 (LMYVALNMTSASSFQMLRGAVIIFTGLFSVAFLGRRLVLSQWLGILATIAGLVVVGL). The N-linked (GlcNAc...) asparagine glycan is linked to N110. The next 7 membrane-spanning stretches (helical) occupy residues 117–137 (FQML…AFLG), 140–160 (LVLS…VVGL), 176–196 (VITG…QMVL), 216–236 (GLFG…IPAG), 261–281 (LIAV…FAGI), 295–312 (LDSL…ALGW), and 317–336 (ALQI…YNGL). The segment at 347 to 371 (GRPPAEESEQERLLGGSRTPINDAS) is disordered. A Phosphothreonine modification is found at T365.

This sequence belongs to the SLC35F solute transporter family. In terms of assembly, interacts with SLC25A5.

It is found in the mitochondrion. It localises to the lysosome membrane. Involved in the maintenance of mitochondrial membrane potential in pancreatic ductal adenocarcinoma (PDAC) cells. Promotes pancreatic ductal adenocarcinoma (PDAC) cell growth. May play a role as a nucleotide-sugar transporter. The sequence is that of Solute carrier family 35 member F6 (SLC35F6) from Pongo abelii (Sumatran orangutan).